The primary structure comprises 20 residues: Thrombin-like enzyme okinaxobin-2 (20 aa).

In terms of domain architecture, Peptidase S1 spans 1–20; the sequence is VVGGDECNINEHRFLVALYY.

This sequence belongs to the peptidase S1 family. Snake venom subfamily. As to quaternary structure, monomer. In terms of processing, glycosylated. In terms of tissue distribution, expressed by the venom gland.

The protein localises to the secreted. With respect to regulation, strongly inactivated by diisopropylfluorophosphate (DFP) and to a lesser extent by tosyl-L-lysine chloromethyl ketone (TLCK). In terms of biological role, thrombin-like snake venom serine protease. Releases both fibrinopeptides A and B from fibrinogen (FGA and FGB) to form fibrin clots. This is Thrombin-like enzyme okinaxobin-2 from Ovophis okinavensis (Ryukyu Island pit viper).